The following is a 125-amino-acid chain: Ribosome-binding factor A (125 aa).

The protein belongs to the RbfA family. Monomer. Binds 30S ribosomal subunits, but not 50S ribosomal subunits or 70S ribosomes.

It is found in the cytoplasm. One of several proteins that assist in the late maturation steps of the functional core of the 30S ribosomal subunit. Associates with free 30S ribosomal subunits (but not with 30S subunits that are part of 70S ribosomes or polysomes). Required for efficient processing of 16S rRNA. May interact with the 5'-terminal helix region of 16S rRNA. The protein is Ribosome-binding factor A of Kosmotoga olearia (strain ATCC BAA-1733 / DSM 21960 / TBF 19.5.1).